The chain runs to 249 residues: NAD(P)H-hydrate epimerase (249 aa).

Residues 11 to 233 (AQQIDVELMS…ELGKKHELNI (223 aa)) enclose the YjeF N-terminal domain. Residue 62 to 66 (NQGGD) coordinates (6S)-NADPHX. Residues Q63 and D127 each coordinate K(+). Residues 131 to 137 (GFSFQPP) and D162 each bind (6S)-NADPHX. A K(+)-binding site is contributed by S165.

It belongs to the NnrE/AIBP family. K(+) is required as a cofactor.

The protein localises to the cytoplasm. It is found in the mitochondrion. It carries out the reaction (6R)-NADHX = (6S)-NADHX. The enzyme catalyses (6R)-NADPHX = (6S)-NADPHX. Its function is as follows. Catalyzes the epimerization of the S- and R-forms of NAD(P)HX, a damaged form of NAD(P)H that is a result of enzymatic or heat-dependent hydration. This is a prerequisite for the S-specific NAD(P)H-hydrate dehydratase to allow the repair of both epimers of NAD(P)HX. The polypeptide is NAD(P)H-hydrate epimerase (Cryptococcus neoformans var. neoformans serotype D (strain JEC21 / ATCC MYA-565) (Filobasidiella neoformans)).